The chain runs to 324 residues: Methionyl-tRNA formyltransferase (324 aa).

(6S)-5,6,7,8-tetrahydrofolate is bound at residue 109 to 112 (SLLP). Residues 305–324 (LHPGESFHKATQDNQGASET) are disordered.

The protein belongs to the Fmt family.

It catalyses the reaction L-methionyl-tRNA(fMet) + (6R)-10-formyltetrahydrofolate = N-formyl-L-methionyl-tRNA(fMet) + (6S)-5,6,7,8-tetrahydrofolate + H(+). Its function is as follows. Attaches a formyl group to the free amino group of methionyl-tRNA(fMet). The formyl group appears to play a dual role in the initiator identity of N-formylmethionyl-tRNA by promoting its recognition by IF2 and preventing the misappropriation of this tRNA by the elongation apparatus. This Nitrosomonas europaea (strain ATCC 19718 / CIP 103999 / KCTC 2705 / NBRC 14298) protein is Methionyl-tRNA formyltransferase.